The following is a 185-amino-acid chain: Glycerol-3-phosphate acyltransferase 4 (185 aa).

6 helical membrane-spanning segments follow: residues 1-21 (MPLL…AYLA), 47-67 (LGRG…SLAI), 69-89 (LALA…AAVL), 113-133 (LLIA…VLLF), 137-157 (VIAA…LYGL), and 158-178 (PGGV…THFI).

The protein belongs to the PlsY family. In terms of assembly, probably interacts with PlsX.

It localises to the cell membrane. It catalyses the reaction an acyl phosphate + sn-glycerol 3-phosphate = a 1-acyl-sn-glycero-3-phosphate + phosphate. It participates in lipid metabolism; phospholipid metabolism. In terms of biological role, catalyzes the transfer of an acyl group from acyl-phosphate (acyl-PO(4)) to glycerol-3-phosphate (G3P) to form lysophosphatidic acid (LPA). This enzyme utilizes acyl-phosphate as fatty acyl donor, but not acyl-CoA or acyl-ACP. The polypeptide is Glycerol-3-phosphate acyltransferase 4 (Dehalococcoides mccartyi (strain ATCC BAA-2266 / KCTC 15142 / 195) (Dehalococcoides ethenogenes (strain 195))).